We begin with the raw amino-acid sequence, 230 residues long: MKAFIHTDWWDVLKPEFEKPYYHQLHEFLKNEYRTKNIHPDMYNIFQAFEWTPFADTKVVILGQDPYHGPGQAHGLSFSVLPGVAVPPSLVNIYKELQDDVGCTPVNHGYLESWAKQGVLLLNSVLTVQNGVAFSHAGKGWERLTDVAIQRLSERSTPVVFILWGKAARSKIKLIDTQTNVVLQAPHPSPLSAYRGFFGSKPFSKTNIALTSFGEQPINWQLPEHVNLEH.

The active-site Proton acceptor is the Asp-65.

Belongs to the uracil-DNA glycosylase (UDG) superfamily. UNG family.

The protein resides in the cytoplasm. It catalyses the reaction Hydrolyzes single-stranded DNA or mismatched double-stranded DNA and polynucleotides, releasing free uracil.. Its function is as follows. Excises uracil residues from the DNA which can arise as a result of misincorporation of dUMP residues by DNA polymerase or due to deamination of cytosine. In Lactiplantibacillus plantarum (strain ATCC BAA-793 / NCIMB 8826 / WCFS1) (Lactobacillus plantarum), this protein is Uracil-DNA glycosylase.